The primary structure comprises 547 residues: CTP synthase (547 aa).

The amidoligase domain stretch occupies residues 1–267 (MTKFVFVTGG…AQQTLALLNL (267 aa)). Serine 13 is a CTP binding site. Serine 13 contacts UTP. ATP-binding positions include 14–19 (SIGKGI) and aspartate 71. Mg(2+) contacts are provided by aspartate 71 and glutamate 141. Residues 148-150 (DIE), 188-193 (KTKPTQ), and lysine 224 contribute to the CTP site. UTP is bound by residues 188–193 (KTKPTQ) and lysine 224. In terms of domain architecture, Glutamine amidotransferase type-1 spans 292-534 (EIALVGKYVQ…VKAAVDHYST (243 aa)). Residue glycine 354 participates in L-glutamine binding. The Nucleophile; for glutamine hydrolysis role is filled by cysteine 381. Residues 382 to 385 (LGMQ), glutamate 405, and arginine 462 each bind L-glutamine. Catalysis depends on residues histidine 507 and glutamate 509.

It belongs to the CTP synthase family. In terms of assembly, homotetramer.

It catalyses the reaction UTP + L-glutamine + ATP + H2O = CTP + L-glutamate + ADP + phosphate + 2 H(+). It carries out the reaction L-glutamine + H2O = L-glutamate + NH4(+). The enzyme catalyses UTP + NH4(+) + ATP = CTP + ADP + phosphate + 2 H(+). It functions in the pathway pyrimidine metabolism; CTP biosynthesis via de novo pathway; CTP from UDP: step 2/2. Allosterically activated by GTP, when glutamine is the substrate; GTP has no effect on the reaction when ammonia is the substrate. The allosteric effector GTP functions by stabilizing the protein conformation that binds the tetrahedral intermediate(s) formed during glutamine hydrolysis. Inhibited by the product CTP, via allosteric rather than competitive inhibition. In terms of biological role, catalyzes the ATP-dependent amination of UTP to CTP with either L-glutamine or ammonia as the source of nitrogen. Regulates intracellular CTP levels through interactions with the four ribonucleotide triphosphates. This is CTP synthase from Rippkaea orientalis (strain PCC 8801 / RF-1) (Cyanothece sp. (strain PCC 8801)).